A 286-amino-acid chain; its full sequence is Merozoite surface protein 2 (286 aa).

The N-terminal stretch at 1–20 (MKVIKTLSIINFFIFVTFNI) is a signal peptide. Residues Asn-22 and Asn-36 are each glycosylated (N-linked (GlcNAc...) asparagine). The interval 43–248 (MTESKTPTPT…SQKECTDGNK (206 aa)) is disordered. Residues 44-212 (TESKTPTPTG…EQTESPELQS (169 aa)) are polymorphic region. Residues 54-68 (AGAGASGSAGSGDGA) are compositionally biased toward gly residues. Copy 1 of the repeat occupies 59 to 68 (SGSAGSGDGA). Positions 59-106 (SGSAGSGDGASGSASGSASGSASGSAGASGSASGSAGASGSASGSAGA) are 5 X 10 AA tandem repeats of S-G-S-A-[GS]-[GS]-[AD]-G-A. The 2; partial repeat unit spans residues 69 to 76 (SGSASGSA). Low complexity predominate over residues 69–137 (SGSASGSASG…STSTSSENPN (69 aa)). 3 repeat units span residues 77-86 (SGSASGSAGA), 88-96 (GSASGSAGA), and 97-106 (SGSASGSAGA). 2 stretches are compositionally biased toward polar residues: residues 153 to 179 (KPNQANKETQNNSNVQQDSQTKSNVPP) and 186 to 214 (KSPTAQPEQAENSAPTAEQTESPELQSAP). Asn-163 carries an N-linked (GlcNAc...) asparagine glycan. Residue Asn-235 is glycosylated (N-linked (GlcNAc...) asparagine). Residues 239–248 (SQKECTDGNK) are compositionally biased toward basic and acidic residues. Cys-243 and Cys-251 form a disulfide bridge. 2 N-linked (GlcNAc...) asparagine glycosylation sites follow: Asn-259 and Asn-260. Asn-260 is lipidated: GPI-anchor amidated asparagine. The propeptide at 261–286 (SSNIASINKFVVLISATLVLSFAIFI) is removed in mature form.

It localises to the cell membrane. Its function is as follows. May play a role in the merozoite attachment to the erythrocyte. This Plasmodium falciparum (isolate 311) protein is Merozoite surface protein 2.